Reading from the N-terminus, the 55-residue chain is Spermatid nuclear transition protein 1 (55 aa).

The segment covering 1-42 (MSTSRKLKSQGMRRGKNRTPHKGVKRSGSKRKYRKSSLKSRK) has biased composition (basic residues). The segment at 1 to 55 (MSTSRKLKSQGMRRGKNRTPHKGVKRSGSKRKYRKSSLKSRKRCDDANRNLRSHL) is disordered. Phosphoserine occurs at positions 9, 36, 37, and 40.

It belongs to the nuclear transition protein 1 family. In terms of tissue distribution, testis.

The protein resides in the nucleus. The protein localises to the chromosome. Functionally, plays a key role in the replacement of histones to protamine in the elongating spermatids of mammals. In condensing spermatids, loaded onto the nucleosomes, where it promotes the recruitment and processing of protamines, which are responsible for histone eviction. In Bos taurus (Bovine), this protein is Spermatid nuclear transition protein 1 (TNP1).